The chain runs to 134 residues: Kinetochore-binding protein 3 (134 aa).

The protein resides in the nucleus. It is found in the chromosome. Its subcellular location is the centromere. It localises to the kinetochore. The protein is Kinetochore-binding protein 3 (kbp-3) of Caenorhabditis elegans.